Consider the following 511-residue polypeptide: MEKFEEISEKHKSRQQYFVYPLLFQEFLYAFAHDYGLNDSEPVEIVSCNNKKFSSLLVKRLIIRMYQQNFWINSVNHPNQDRLLDYKNFFYSEFFSQILSEGFSIVVEIPFSLRESFCPKEKEIPKFQNLRSIHSIFSFLEDKFLHLHYLSHIEIPYPIHLEILVQLLQYHIQDVPSLHLLRFFLNYNSNWNSFITSIKSFFLLKKENKRLFRFLYNSYVSEYEFFLLFLRKQSSCLPLASSGGFLERIHFSRKMEHFGIMDPGFFRKTLWFFMDPLMHYVRYQGKAILASKGTLFLKKKWKWYLVNFCQYSFSFWTQPRRIHLNQLANSCFDFLGYLSSVPKSPLLVRNQMLENSFLIDTRMIKFDTIVPATLLIGSLSKAQFCTGSGHPISKPIWTELSDWDILDRFGQICKNLFHYHSGSSKKRTLYRLKYILRLSCARTLARKHKSTVRTFMQRLGSVFLEEFFTEEDPVFSLMFTKTTLFYFRGSHSERIWYLDIIRINGLVNPRN.

The protein belongs to the intron maturase 2 family. MatK subfamily.

Its subcellular location is the plastid. It localises to the chloroplast. Its function is as follows. Usually encoded in the trnK tRNA gene intron. Probably assists in splicing its own and other chloroplast group II introns. The polypeptide is Maturase K (Brachypodium distachyon (Purple false brome)).